The sequence spans 177 residues: Large ribosomal subunit protein uL6 (177 aa).

This sequence belongs to the universal ribosomal protein uL6 family. In terms of assembly, part of the 50S ribosomal subunit.

Functionally, this protein binds to the 23S rRNA, and is important in its secondary structure. It is located near the subunit interface in the base of the L7/L12 stalk, and near the tRNA binding site of the peptidyltransferase center. The sequence is that of Large ribosomal subunit protein uL6 from Pseudomonas syringae pv. syringae (strain B728a).